We begin with the raw amino-acid sequence, 253 residues long: Probable transcriptional regulatory protein Hore_12350 (253 aa).

Positions 1–21 are disordered; the sequence is MAGHSKWANIKHKKAKEDRKR.

This sequence belongs to the TACO1 family.

Its subcellular location is the cytoplasm. This chain is Probable transcriptional regulatory protein Hore_12350, found in Halothermothrix orenii (strain H 168 / OCM 544 / DSM 9562).